The primary structure comprises 191 residues: Probable calcium-binding protein CML8 (191 aa).

Positions methionine 1–threonine 41 are disordered. Residues alanine 17–aspartate 27 show a composition bias toward gly residues. EF-hand domains lie at glutamine 43–glutamate 78, methionine 79–glutamate 114, aspartate 116–proline 151, and phenylalanine 152–glycine 187. Residues aspartate 56, aspartate 58, serine 60, threonine 62, glutamate 67, aspartate 92, aspartate 94, serine 96, threonine 98, glutamate 103, aspartate 129, aspartate 131, asparagine 133, lysine 135, aspartate 140, aspartate 165, asparagine 167, aspartate 169, glutamate 171, and glutamate 176 each coordinate Ca(2+).

Its function is as follows. Potential calcium sensor. This is Probable calcium-binding protein CML8 (CML8) from Oryza sativa subsp. japonica (Rice).